The sequence spans 125 residues: Snaclec botrocetin subunit beta (125 aa).

Intrachain disulfides connect cysteine 2/cysteine 13, cysteine 30/cysteine 121, and cysteine 98/cysteine 113. The C-type lectin domain occupies 9 to 122 (YEGHCYRFFK…CTRFKNFVCE (114 aa)).

Belongs to the snaclec family. As to quaternary structure, heterodimer of subunits alpha and beta; disulfide-linked. Botrocetin and vWF form a soluble complex. In terms of tissue distribution, expressed by the venom gland.

It is found in the secreted. In terms of biological role, snaclec that binds to von Willebrand factor (VWF) and induces its interaction with GPIbalpha (GP1BA) (via the vWF A1 domain), resulting in platelet aggregation. This Bothrops jararaca (Jararaca) protein is Snaclec botrocetin subunit beta.